The sequence spans 962 residues: Glycine dehydrogenase (decarboxylating) (962 aa).

Residue lysine 709 is modified to N6-(pyridoxal phosphate)lysine.

It belongs to the GcvP family. As to quaternary structure, the glycine cleavage system is composed of four proteins: P, T, L and H. The cofactor is pyridoxal 5'-phosphate.

It catalyses the reaction N(6)-[(R)-lipoyl]-L-lysyl-[glycine-cleavage complex H protein] + glycine + H(+) = N(6)-[(R)-S(8)-aminomethyldihydrolipoyl]-L-lysyl-[glycine-cleavage complex H protein] + CO2. Functionally, the glycine cleavage system catalyzes the degradation of glycine. The P protein binds the alpha-amino group of glycine through its pyridoxal phosphate cofactor; CO(2) is released and the remaining methylamine moiety is then transferred to the lipoamide cofactor of the H protein. The polypeptide is Glycine dehydrogenase (decarboxylating) (Shewanella sp. (strain MR-7)).